A 464-amino-acid chain; its full sequence is Glutamate--tRNA ligase 2 (464 aa).

The 'HIGH' region signature appears at 11-21 (PSPTGFLHIGS). The 'KMSKS' region motif lies at 240–244 (KLSKR). An ATP-binding site is contributed by lysine 243.

Belongs to the class-I aminoacyl-tRNA synthetase family. Glutamate--tRNA ligase type 1 subfamily. In terms of assembly, monomer.

It is found in the cytoplasm. The catalysed reaction is tRNA(Glu) + L-glutamate + ATP = L-glutamyl-tRNA(Glu) + AMP + diphosphate. Functionally, catalyzes the attachment of glutamate to tRNA(Glu) in a two-step reaction: glutamate is first activated by ATP to form Glu-AMP and then transferred to the acceptor end of tRNA(Glu). This chain is Glutamate--tRNA ligase 2, found in Rickettsia bellii (strain OSU 85-389).